We begin with the raw amino-acid sequence, 77 residues long: MAFLKKSLFLILFLGLVPLSFCENDKREGENEEEQDDDQSEEKRALGTLLKGVGSAVATVGKMVADQFGKLLQAGQG.

A signal peptide spans 1 to 22; that stretch reads MAFLKKSLFLILFLGLVPLSFC. Positions 23-44 are excised as a propeptide; it reads ENDKREGENEEEQDDDQSEEKR. Gln-76 carries the glutamine amide modification.

As to expression, expressed by the skin glands.

Its subcellular location is the secreted. The protein resides in the target cell membrane. Antimicrobial peptide with potent activity against Gram-positive bacteria B.megaterium, C.glutamicum and S.aureus and mollicutes A.laidlawii and S.melliferum. Less active against Gram-negative bacteria B.cepacia, P.aeruginosa, S.typhimurium and S.meliloti. Probably acts by disturbing membrane functions with its amphipathic structure. This Phyllomedusa sauvagei (Sauvage's leaf frog) protein is Dermatoxin-S1.